A 166-amino-acid chain; its full sequence is Phospholipase A2 inhibitor clone 04 (166 aa).

Positions 1 to 19 are cleaved as a signal peptide; sequence MRLILLSSLLLLGIFLANG. The region spanning 46–161 is the C-type lectin domain; sequence LKDAFLTVHR…CDDNRLVVCE (116 aa). 2 cysteine pairs are disulfide-bonded: Cys-83-Cys-160 and Cys-138-Cys-152. A glycan (N-linked (GlcNAc...) asparagine) is linked at Asn-122.

The protein belongs to the alpha-type phospholipase A2 inhibitor family. In terms of assembly, homotrimer; non-covalently linked. Expressed by the liver.

It is found in the secreted. In terms of biological role, this phospholipase A2 inhibitor binds directly phospholipase A2 in the presence or absence of calcium. The chain is Phospholipase A2 inhibitor clone 04 from Bothrops moojeni (Lance-headed viper).